A 67-amino-acid chain; its full sequence is Teratocyte protein CftICK-II (67 aa).

The first 25 residues, 1–25 (MVKSLLFAIGYLIFLLVTRVNVINA), serve as a signal peptide directing secretion. 3 disulfides stabilise this stretch: C28-C42, C35-C46, and C41-C57.

Abundantly expressed by teratocytes, which are extra-embryonic cells released by parasitoid wasps into their hosts during larval eclosion.

It localises to the secreted. Functionally, this endoparasitoid wasp peptide has immununosuppressive, antimicrobial and insecticidal activities. Suppress cellular immunity which is detectable as a reduction of hemocyte encapsulation in the host. Shows moderate antifungal activity against C.albicans (MIC=4 ug/ml). In vivo, ingestion of this peptide (probably at excessive doses) increases larval mortality and reduces leaf consumption of D.saccharalis, a permissive host for C.flavipes. This is Teratocyte protein CftICK-II from Cotesia flavipes (Parasitic wasp).